The sequence spans 976 residues: MKLKSVFRSVLKYRKTNLSLLLLITYSIITLLYIFDHERYKLNLPKEDEHPEFNDLLETAWGDLQIITASFHPYTSKENDKVHDYLLKRVLEITGNSSFASVSDDKESERSILFQQQDPFNESSRFSRVTYFESSNILVKLEGKNPEEEGLLLSAHFDSVPTGYGATDDGMGVVSLLANLKYHIKHRPNRTLIFNFNNNEEFGLLGASTYFNHSWSNLTKYVINLEGTGAGGKAVLFRTSDTSTAKIYQQSVKENPFGNSIYQQGFYSRYVRSETDYKIYEENGMRGWDVAFYKPRNLYHTIKDSIQYTSKASLWHMLHTSLQLSAYVASNSLDTADQMPACYFDFIGLKFFVISAKTLFYWNCIFLLVSPVVAIGLYLISRDRMTWKSHSWLSWTRFPLSLAAGIIVQKLFSNDIIRSNPLTFSRNYFWPISAFFTQVIFTSYVLINCSNFFFPCADMKSLSIIELFIILWTILLFTSKLLYSSDYRYTGLYPLSIFFLLSTIAAILRLLALALGMRTRKRLGRECRDHHSNYSSHSQIDMERDGQENLEQPQDQFTSSQDDQASIQDDNVSTTSAGPSHNVDEDHGMDSSSQQHDERVPLLKGSNSMEEGLSTRENSLKLEYTDYAWIIQFLLIVPIPSFILFNSVDVIMDALNHTVQEGSKATFDVLRFGMVGSILMALPILPFFYKVNYITISLTALLFLISASKTLLVHPFTNSNPLKVRFSQNIDLSQGNAASVHVLGREGNFLKPMLQDLPSIKYSSTHINCTSVTNGMELCMYDGMQPNLLSTNGNTNISSMAKVHVLHNNRNSTERSPYEPIVAELLLDVKENRACTLTFESRHQAKSPVREITVYQKKNSAPQKTNITKTIKSASGINELQLHKLDFDQETYHIGVQWFPKLLTDGNLEDDKLGTKDELSVSISCYWGEYDSESVVNGTAVRKIPAFDELINYAPLSFSFTNEQKGLVIVKDAIIL.

Residues 1–15 (MKLKSVFRSVLKYRK) are Cytoplasmic-facing. A helical membrane pass occupies residues 16–36 (TNLSLLLLITYSIITLLYIFD). The Vacuolar portion of the chain corresponds to 37 to 359 (HERYKLNLPK…KFFVISAKTL (323 aa)). 2 N-linked (GlcNAc...) asparagine glycosylation sites follow: asparagine 96 and asparagine 121. Zn(2+) is bound by residues histidine 156 and aspartate 168. Asparagine 189 carries an N-linked (GlcNAc...) asparagine glycan. Glutamate 200 (proton acceptor) is an active-site residue. Glutamate 201 serves as a coordination point for Zn(2+). N-linked (GlcNAc...) asparagine glycans are attached at residues asparagine 212 and asparagine 217. Glutamate 226 and histidine 300 together coordinate Zn(2+). Residues 360–380 (FYWNCIFLLVSPVVAIGLYLI) traverse the membrane as a helical segment. Residues 381 to 392 (SRDRMTWKSHSW) lie on the Cytoplasmic side of the membrane. The helical transmembrane segment at 393-412 (LSWTRFPLSLAAGIIVQKLF) threads the bilayer. Residues 413–428 (SNDIIRSNPLTFSRNY) are Vacuolar-facing. Residues 429–449 (FWPISAFFTQVIFTSYVLINC) traverse the membrane as a helical segment. Topologically, residues 450–461 (SNFFFPCADMKS) are cytoplasmic. A helical transmembrane segment spans residues 462–482 (LSIIELFIILWTILLFTSKLL). Over 483–496 (YSSDYRYTGLYPLS) the chain is Vacuolar. The chain crosses the membrane as a helical span at residues 497–517 (IFFLLSTIAAILRLLALALGM). Residues 518 to 627 (RTRKRLGREC…NSLKLEYTDY (110 aa)) are Cytoplasmic-facing. Residues 528–610 (RDHHSNYSSH…PLLKGSNSME (83 aa)) are disordered. The span at 549-558 (NLEQPQDQFT) shows a compositional bias: polar residues. The segment covering 559–570 (SSQDDQASIQDD) has biased composition (low complexity). Residues 582 to 601 (NVDEDHGMDSSSQQHDERVP) are compositionally biased toward basic and acidic residues. Residues 628 to 648 (AWIIQFLLIVPIPSFILFNSV) traverse the membrane as a helical segment. The Vacuolar portion of the chain corresponds to 649–668 (DVIMDALNHTVQEGSKATFD). The N-linked (GlcNAc...) asparagine glycan is linked to asparagine 656. The chain crosses the membrane as a helical span at residues 669–689 (VLRFGMVGSILMALPILPFFY). The Cytoplasmic segment spans residues 690-692 (KVN). The helical transmembrane segment at 693–713 (YITISLTALLFLISASKTLLV) threads the bilayer. The Vacuolar segment spans residues 714–976 (HPFTNSNPLK…LVIVKDAIIL (263 aa)). N-linked (GlcNAc...) asparagine glycans are attached at residues asparagine 768, asparagine 796, asparagine 811, asparagine 866, and asparagine 937.

This sequence belongs to the peptidase M28 family. Requires Zn(2+) as cofactor.

It localises to the vacuole membrane. In terms of biological role, may be involved in vacuolar sorting and osmoregulation. In Saccharomyces cerevisiae (strain RM11-1a) (Baker's yeast), this protein is Vacuolar membrane protease.